The following is a 52-amino-acid chain: KKGVTLREDDRFPCNAGNCACLPLDSYSYTCQSPTSSTANCEGNECVSEADW.

A propeptide spanning residues 1–6 (KKGVTL) is cleaved from the precursor. Disulfide bonds link cysteine 14–cysteine 31, cysteine 19–cysteine 41, and cysteine 21–cysteine 46.

In terms of tissue distribution, expressed by the venom duct.

Its subcellular location is the secreted. Functionally, probable neurotoxin with unknown target. Possibly targets ion channels. This Californiconus californicus (California cone) protein is Conotoxin Cal9.2b.